The chain runs to 624 residues: tRNA uridine 5-carboxymethylaminomethyl modification enzyme MnmG (624 aa).

FAD-binding positions include 13–18 (GGGHAG), valine 125, and serine 180. 273–287 (GPRYCPSIEDKIVRF) is a binding site for NAD(+). Glutamine 370 contributes to the FAD binding site.

The protein belongs to the MnmG family. As to quaternary structure, homodimer. Heterotetramer of two MnmE and two MnmG subunits. Requires FAD as cofactor.

It localises to the cytoplasm. Functionally, NAD-binding protein involved in the addition of a carboxymethylaminomethyl (cmnm) group at the wobble position (U34) of certain tRNAs, forming tRNA-cmnm(5)s(2)U34. This chain is tRNA uridine 5-carboxymethylaminomethyl modification enzyme MnmG, found in Legionella pneumophila subsp. pneumophila (strain Philadelphia 1 / ATCC 33152 / DSM 7513).